The following is a 284-amino-acid chain: Acetyl-coenzyme A carboxylase carboxyl transferase subunit beta (284 aa).

A CoA carboxyltransferase N-terminal domain is found at 27 to 284 (LMTKCPSCKY…ELHDGGVRHV (258 aa)). Zn(2+)-binding residues include C31, C34, C50, and C52. A C4-type zinc finger spans residues 31-52 (CPSCKYMHYTKQLNENHKVCDC).

The protein belongs to the AccD/PCCB family. Acetyl-CoA carboxylase is a heterohexamer composed of biotin carboxyl carrier protein (AccB), biotin carboxylase (AccC) and two subunits each of ACCase subunit alpha (AccA) and ACCase subunit beta (AccD). Zn(2+) serves as cofactor.

The protein resides in the cytoplasm. It carries out the reaction N(6)-carboxybiotinyl-L-lysyl-[protein] + acetyl-CoA = N(6)-biotinyl-L-lysyl-[protein] + malonyl-CoA. It participates in lipid metabolism; malonyl-CoA biosynthesis; malonyl-CoA from acetyl-CoA: step 1/1. Functionally, component of the acetyl coenzyme A carboxylase (ACC) complex. Biotin carboxylase (BC) catalyzes the carboxylation of biotin on its carrier protein (BCCP) and then the CO(2) group is transferred by the transcarboxylase to acetyl-CoA to form malonyl-CoA. The chain is Acetyl-coenzyme A carboxylase carboxyl transferase subunit beta from Exiguobacterium sp. (strain ATCC BAA-1283 / AT1b).